A 354-amino-acid chain; its full sequence is Selenide, water dikinase (354 aa).

The active site involves Cys23. ATP contacts are provided by residues Lys26 and Thr54 to Asp56. Asp57 is a Mg(2+) binding site. ATP contacts are provided by residues Asp74, Asp97, and Gly145–Ser147. Mg(2+) is bound at residue Asp97. Asp233 provides a ligand contact to Mg(2+).

This sequence belongs to the selenophosphate synthase 1 family. Class I subfamily. As to quaternary structure, homodimer. Mg(2+) is required as a cofactor.

It carries out the reaction hydrogenselenide + ATP + H2O = selenophosphate + AMP + phosphate + 2 H(+). Synthesizes selenophosphate from selenide and ATP. The chain is Selenide, water dikinase from Burkholderia ambifaria (strain MC40-6).